The following is a 432-amino-acid chain: Glutamate-1-semialdehyde 2,1-aminomutase (432 aa).

N6-(pyridoxal phosphate)lysine is present on lysine 272.

It belongs to the class-III pyridoxal-phosphate-dependent aminotransferase family. HemL subfamily. Homodimer. Requires pyridoxal 5'-phosphate as cofactor.

The protein localises to the cytoplasm. The enzyme catalyses (S)-4-amino-5-oxopentanoate = 5-aminolevulinate. Its pathway is porphyrin-containing compound metabolism; protoporphyrin-IX biosynthesis; 5-aminolevulinate from L-glutamyl-tRNA(Glu): step 2/2. The protein operates within porphyrin-containing compound metabolism; chlorophyll biosynthesis. The sequence is that of Glutamate-1-semialdehyde 2,1-aminomutase from Gloeobacter violaceus (strain ATCC 29082 / PCC 7421).